The following is a 424-amino-acid chain: Glutamyl-tRNA reductase (424 aa).

Residues 51–54, S99, 104–106, and Q110 contribute to the substrate site; these read TCNR and EDQ. C52 (nucleophile) is an active-site residue. 179 to 184 provides a ligand contact to NADP(+); that stretch reads GGGEMG.

This sequence belongs to the glutamyl-tRNA reductase family. In terms of assembly, homodimer.

It carries out the reaction (S)-4-amino-5-oxopentanoate + tRNA(Glu) + NADP(+) = L-glutamyl-tRNA(Glu) + NADPH + H(+). It participates in porphyrin-containing compound metabolism; protoporphyrin-IX biosynthesis; 5-aminolevulinate from L-glutamyl-tRNA(Glu): step 1/2. In terms of biological role, catalyzes the NADPH-dependent reduction of glutamyl-tRNA(Glu) to glutamate 1-semialdehyde (GSA). In Methanocorpusculum labreanum (strain ATCC 43576 / DSM 4855 / Z), this protein is Glutamyl-tRNA reductase.